The primary structure comprises 154 residues: Endoribonuclease YbeY (154 aa).

Residues histidine 114, histidine 118, and histidine 124 each contribute to the Zn(2+) site.

This sequence belongs to the endoribonuclease YbeY family. The cofactor is Zn(2+).

It localises to the cytoplasm. Its function is as follows. Single strand-specific metallo-endoribonuclease involved in late-stage 70S ribosome quality control and in maturation of the 3' terminus of the 16S rRNA. The polypeptide is Endoribonuclease YbeY (Histophilus somni (strain 129Pt) (Haemophilus somnus)).